The chain runs to 378 residues: uncharacterized protein (378 aa).

Helical transmembrane passes span 7 to 29, 33 to 55, 68 to 85, 90 to 108, 115 to 137, 152 to 174, 204 to 225, 245 to 267, 280 to 302, and 347 to 366; these read VTPF…RLSQ, LFFV…YQII, VSYL…EFYT, SGSL…HLLL, PLTV…FLYL, LTVG…MLIM, NYKL…FLYL, IFLF…ASHA, LILY…PRIV, and FSPL…ALFL.

It is found in the cell membrane. This is an uncharacterized protein from Aquifex aeolicus (strain VF5).